Here is a 469-residue protein sequence, read N- to C-terminus: Mitochondrial distribution and morphology protein 10 (469 aa).

This sequence belongs to the MDM10 family. Component of the ER-mitochondria encounter structure (ERMES) or MDM complex, composed of MMM1, MDM10, MDM12 and MDM34. Associates with the mitochondrial outer membrane sorting assembly machinery SAM(core) complex.

Its subcellular location is the mitochondrion outer membrane. In terms of biological role, component of the ERMES/MDM complex, which serves as a molecular tether to connect the endoplasmic reticulum and mitochondria. Components of this complex are involved in the control of mitochondrial shape and protein biogenesis and may function in phospholipid exchange. MDM10 is involved in the late assembly steps of the general translocase of the mitochondrial outer membrane (TOM complex). Functions in the TOM40-specific route of the assembly of outer membrane beta-barrel proteins, including the association of TOM40 with the receptor TOM22 and small TOM proteins. Can associate with the SAM(core) complex as well as the MDM12-MMM1 complex, both involved in late steps of the major beta-barrel assembly pathway, that is responsible for biogenesis of all outer membrane beta-barrel proteins. May act as a switch that shuttles between both complexes and channels precursor proteins into the TOM40-specific pathway. Plays a role in mitochondrial morphology and in the inheritance of mitochondria. In Scheffersomyces stipitis (strain ATCC 58785 / CBS 6054 / NBRC 10063 / NRRL Y-11545) (Yeast), this protein is Mitochondrial distribution and morphology protein 10.